A 330-amino-acid polypeptide reads, in one-letter code: Phosphate acyltransferase (330 aa).

This sequence belongs to the PlsX family. As to quaternary structure, homodimer. Probably interacts with PlsY.

The protein resides in the cytoplasm. It catalyses the reaction a fatty acyl-[ACP] + phosphate = an acyl phosphate + holo-[ACP]. It participates in lipid metabolism; phospholipid metabolism. In terms of biological role, catalyzes the reversible formation of acyl-phosphate (acyl-PO(4)) from acyl-[acyl-carrier-protein] (acyl-ACP). This enzyme utilizes acyl-ACP as fatty acyl donor, but not acyl-CoA. The protein is Phosphate acyltransferase of Campylobacter hominis (strain ATCC BAA-381 / DSM 21671 / CCUG 45161 / LMG 19568 / NCTC 13146 / CH001A).